A 325-amino-acid polypeptide reads, in one-letter code: Replication factor C small subunit (325 aa).

Residue 45 to 52 (GPPGTGKT) participates in ATP binding.

This sequence belongs to the activator 1 small subunits family. RfcS subfamily. Heteromultimer composed of small subunits (RfcS) and large subunits (RfcL).

Part of the RFC clamp loader complex which loads the PCNA sliding clamp onto DNA. The sequence is that of Replication factor C small subunit from Sulfolobus acidocaldarius (strain ATCC 33909 / DSM 639 / JCM 8929 / NBRC 15157 / NCIMB 11770).